The sequence spans 315 residues: Putative glycosyltransferase ORF315 (315 aa).

The protein belongs to the glycosyltransferase group 1 family. Glycosyltransferase 4 subfamily.

The chain is Putative glycosyltransferase ORF315 from Acidianus convivator (ABV).